The chain runs to 505 residues: Exoglucanase 1 (505 aa).

Residues 1-17 (MYRKLAVISAFLAAARA) form the signal peptide. Glutamine 18 is subject to Pyrrolidone carboxylic acid. The catalytic stretch occupies residues 18–449 (QQVCTQQAET…GSTGGNTGSN (432 aa)). Intrachain disulfides connect cysteine 21–cysteine 88, cysteine 36–cysteine 41, cysteine 66–cysteine 87, and cysteine 77–cysteine 83. Residues asparagine 93 and asparagine 126 are each glycosylated (N-linked (GlcNAc...) asparagine). 6 disulfide bridges follow: cysteine 151/cysteine 410, cysteine 185/cysteine 223, cysteine 189/cysteine 222, cysteine 243/cysteine 269, cysteine 251/cysteine 256, and cysteine 274/cysteine 344. Glutamate 225 acts as the Nucleophile in catalysis. The active-site Proton donor/acceptor is the glutamate 230. Asparagine 283 and asparagine 397 each carry an N-linked (GlcNAc...) asparagine glycan. Disordered regions lie at residues 399–423 (TASTPGAKRGSCSTSSGVPAQVEAQ) and 440–472 (GSTGGNTGSNPPGTSTTRAPPSSTGSSPTATQT). Over residues 409–423 (SCSTSSGVPAQVEAQ) the composition is skewed to polar residues. Over residues 447-470 (GSNPPGTSTTRAPPSSTGSSPTAT) the composition is skewed to low complexity. A linker region spans residues 450 to 468 (PPGTSTTRAPPSSTGSSPT). The region spanning 469 to 505 (ATQTHYGQCGGTGWTGPTRCASGYTCQVLNPFYSQCL) is the CBM1 domain.

The protein belongs to the glycosyl hydrolase 7 (cellulase C) family. O-glycosylated. O-glycosylation of the cellulase linker provides protection from proteolysis. Linker glycans also contribute to binding affinity of cellobiohydrolases to cellulose.

The protein resides in the secreted. It carries out the reaction Hydrolysis of (1-&gt;4)-beta-D-glucosidic linkages in cellulose and cellotetraose, releasing cellobiose from the non-reducing ends of the chains.. In terms of biological role, exocellobiohydrolases (CBH) that catalyzes the hydrolysis of 1,4-beta-D-glucosidic bonds in cellulose to release the disaccharide cellobiose. The degradation of cellulose involves an interplay between different cellulolytic enzymes. Hydrolysis starts with endoglucanases (EGs), which cut internal beta-1,4-glucosidic bonds in cellulose to reduce the polymerization degree of the substrate and create new chain ends for exocellobiohydrolases (CBHs). The CBHs release the disaccharide cellobiose from the non-reducing end of the cellulose polymer chain. Finally, beta-1,4-glucosidases hydrolyze the cellobiose and other short cello-oligosaccharides into glucose units. The chain is Exoglucanase 1 (cbh1) from Trichoderma harzianum (Hypocrea lixii).